Consider the following 383-residue polypeptide: Podocin (383 aa).

Residues 1–41 (MERRARSSSRESRGRGGRTPHKENKRAKAERSGGGRGRQEA) are compositionally biased toward basic and acidic residues. Positions 1-76 (MERRARSSSR…VDEVRGSGEE (76 aa)) are disordered. The Cytoplasmic segment spans residues 1-102 (MERRARSSSR…TKSSGLGACE (102 aa)). Residue cysteine 101 is the site of S-palmitoyl cysteine attachment. The stretch at 103–123 (WLLVLISLLFIIMTFPFSIWF) is an intramembrane region. The Cytoplasmic portion of the chain corresponds to 124-383 (CVKVVQEYER…NPKKKDSPML (260 aa)). The N-linked (GlcNAc...) asparagine glycan is linked to glutamine 287. The segment at 355–383 (NRTQGSLPFPSPSKPVEPLNPKKKDSPML) is disordered. A compositionally biased stretch (basic and acidic residues) spans 374–383 (NPKKKDSPML).

This sequence belongs to the band 7/mec-2 family. In terms of assembly, interacts with nephrin/NPHS1 and KIRREL1. Interacts directly with CD2AP. Interacts with DDN. In terms of processing, glycosylated. In terms of tissue distribution, almost exclusively expressed in the podocytes of fetal and mature kidney glomeruli.

The protein resides in the cell membrane. It is found in the endoplasmic reticulum. In terms of biological role, plays a role in the regulation of glomerular permeability, acting probably as a linker between the plasma membrane and the cytoskeleton. The polypeptide is Podocin (NPHS2) (Homo sapiens (Human)).